Here is a 351-residue protein sequence, read N- to C-terminus: MAAPNSLFVRACKRQPVERTPVWFMRQAGRYMSEYRAVREKYSLVEICKKPDVAAEVTITAAEALNVDAAIIFADLLLPLEVMGLPFHFSPGEGPVIEVPIRDAAHITRLRTDRAHDLGYVAEAVKKVSDHFGSKLPVIGFCGAPFTLASYMIEGGGSRNYLEVKKLMYNSPHAWDELLGKLVAVLSEYTADQVKAGADVIQIFDSWVGCLSVEDYRRYVLPRTTELVKALQHSTRVPIIYFGTDSATLLPSMRETGAEVIGLDWRVPLDQGWSLLEHSVAIQGNLDPVLLFAEWPELKSRAERILKQADGRPGHIFNLGHGILPHTPVQNVKDLAKFVHEYSSQLVGPRE.

Residues 26-30, Asp-75, Tyr-151, Ser-206, and His-321 each bind substrate; that span reads RQAGR.

The protein belongs to the uroporphyrinogen decarboxylase family. In terms of assembly, homodimer.

The protein resides in the cytoplasm. It catalyses the reaction uroporphyrinogen III + 4 H(+) = coproporphyrinogen III + 4 CO2. The protein operates within porphyrin-containing compound metabolism; protoporphyrin-IX biosynthesis; coproporphyrinogen-III from 5-aminolevulinate: step 4/4. Catalyzes the decarboxylation of four acetate groups of uroporphyrinogen-III to yield coproporphyrinogen-III. This is Uroporphyrinogen decarboxylase from Koribacter versatilis (strain Ellin345).